We begin with the raw amino-acid sequence, 365 residues long: Succinyl-diaminopimelate desuccinylase (365 aa).

Residue His-64 participates in Zn(2+) binding. Asp-66 is an active-site residue. Asp-95 is a Zn(2+) binding site. Glu-125 functions as the Proton acceptor in the catalytic mechanism. Zn(2+)-binding residues include Glu-126, Glu-154, and His-339.

It belongs to the peptidase M20A family. DapE subfamily. As to quaternary structure, homodimer. The cofactor is Zn(2+). Requires Co(2+) as cofactor.

The enzyme catalyses N-succinyl-(2S,6S)-2,6-diaminopimelate + H2O = (2S,6S)-2,6-diaminopimelate + succinate. It functions in the pathway amino-acid biosynthesis; L-lysine biosynthesis via DAP pathway; LL-2,6-diaminopimelate from (S)-tetrahydrodipicolinate (succinylase route): step 3/3. Catalyzes the hydrolysis of N-succinyl-L,L-diaminopimelic acid (SDAP), forming succinate and LL-2,6-diaminopimelate (DAP), an intermediate involved in the bacterial biosynthesis of lysine and meso-diaminopimelic acid, an essential component of bacterial cell walls. The chain is Succinyl-diaminopimelate desuccinylase from Campylobacter curvus (strain 525.92).